We begin with the raw amino-acid sequence, 206 residues long: Protein DEHYDRATION-INDUCED 19 (206 aa).

A Phosphothreonine modification is found at Thr-105. Ser-107 is modified (phosphoserine). Positions 142-167 (SSFISPTRSQSSPAPRQTKNVSEDKQ) are disordered. The segment covering 143 to 161 (SFISPTRSQSSPAPRQTKN) has biased composition (polar residues).

The protein belongs to the Di19 family. Interacts with ADO2/LKP2, CPK11 and CPK4. Weak interaction with CPK12 and no interactions with CPK1, CPK5 or CPK26. Post-translationally, phosphorylated within the NLS/NES region. Expressed in seedlings, roots, leaves, stems, flowers and siliques.

The protein localises to the nucleus. The chain is Protein DEHYDRATION-INDUCED 19 (DI19-1) from Arabidopsis thaliana (Mouse-ear cress).